A 537-amino-acid chain; its full sequence is Cytochrome P450 monooxygenase yanC (537 aa).

Positions 1 to 21 (MALVHLTALAACGLLLVILRA) are cleaved as a signal peptide. Position 449 (C449) interacts with heme.

This sequence belongs to the cytochrome P450 family. It depends on heme as a cofactor.

The protein operates within secondary metabolite biosynthesis; terpenoid biosynthesis. Cytochrome P450 monooxygenase; part of the gene cluster that mediates the biosynthesis of yanuthone D, a fungal isoprenoid epoxycyclohexenone that acts as an antibiotic against fungi and bacteria. The first step of the pathway is the synthesis of 6-methylsalicylic acid (6-MSA) by the polyketide synthase yanA. 6-MSA is then converted to m-cresol by the decarboxylase yanB. The cytochrome P450 monooxygenase yanC then catalyzes the oxidation of m-cresol to toluquinol. Epoxidation of toluquinol is then performed by the short chain dehydrogenase yanD, with the help of yanE, and a further prenylation by yanG leads to 7-deacetoxyyanuthone A. The next step is the hydroxylation of C-22 of 7-deacetoxyyanuthone A by the cytochrome P450 monooxygenase yanH to yield 22-deacetylyanuthone A. O-Mevalon transferase yanI then attaches mevalon to the hydroxyl group of 22-deacetylyanuthone A to produce yanuthone E. Finally, the FAD-dependent monooxygenase yanF oxidizes the hydroxyl group at C15 of yanuthone E to form yanuthone D. Furthermore, several branching points in the pathway lead to the production of yanuthones F and G from 7-deacetoxyyanuthone A; yanuthones H and I from 22-deacetylyanuthone A; and yanuthone J from yanuthone E. YanC is also involved in the synthesis of yanuthone X1 which does not have 6-methylsalicylic acid (6-MSA) as precursor. The chain is Cytochrome P450 monooxygenase yanC from Aspergillus niger (strain ATCC 1015 / CBS 113.46 / FGSC A1144 / LSHB Ac4 / NCTC 3858a / NRRL 328 / USDA 3528.7).